A 599-amino-acid chain; its full sequence is Glycerophosphodiester phosphodiesterase domain-containing protein 5 (599 aa).

Residues 1–42 (MVKHQPLQYYEPQLCLSCLTGIYGCRWKRYQRSHDDTTKWER) are Cytoplasmic-facing. 2 disulfide bridges follow: cysteine 15-cysteine 18 and cysteine 25-cysteine 576. The helical transmembrane segment at 43-63 (LWFLILTSSFFLTLVWFYFWW) threads the bilayer. Over 64–87 (EVHNDYNEINWFLYNRMGYWSDWS) the chain is Extracellular. A helical transmembrane segment spans residues 88–108 (IPILVTTAAGFTYITVLLILA). Residues 109–125 (LCHIAVGQQMNLHWLHK) are Cytoplasmic-facing. A helical transmembrane segment spans residues 126 to 146 (IGLMTTLITTVVTMSSIAQLW). Residues 147–160 (DDEWEMVFISLQAT) lie on the Extracellular side of the membrane. The chain crosses the membrane as a helical span at residues 161 to 181 (APFLHIGALAAVTALSWLIAG). At 182-192 (QFARMEKATSQ) the chain is on the cytoplasmic side. A helical transmembrane segment spans residues 193-213 (MLMVTAYLAVVVALYLVPLTI). Over 214–497 (SSPCIMEKKA…IWLMPPDEYR (284 aa)) the chain is Extracellular. The GP-PDE domain maps to 228 to 485 (PAIIGHRGAP…DSSHVLRKVP (258 aa)). Residues asparagine 301, asparagine 336, asparagine 352, asparagine 374, and asparagine 448 are each glycosylated (N-linked (GlcNAc...) asparagine). A helical transmembrane segment spans residues 498–518 (LIWITSDLISFIIIVGVFIFQ). Topologically, residues 519 to 599 (NYHNDQWRLG…DHRDTRLRMN (81 aa)) are cytoplasmic.

It belongs to the glycerophosphoryl diester phosphodiesterase family. As to quaternary structure, interacts with PRDX1; forms a mixed-disulfide with PRDX1, leading to disrupt intramolecular disulfide bond between Cys-25 and Cys-576. Intramolecular disulfide bond between Cys-25 and Cys-576 is reduced by PRDX1. As to expression, detected in mature motor neurons.

Its subcellular location is the endomembrane system. The protein resides in the cytoplasm. It is found in the perinuclear region. It localises to the cell projection. The protein localises to the growth cone. It catalyses the reaction a 1,2-diacyl-sn-glycero-3-phospho-(1D-myo-inositol-4,5-bisphosphate) + H2O = 1D-myo-inositol 1,4,5-trisphosphate + a 1,2-diacyl-sn-glycerol + H(+). The enzyme catalyses sn-glycerol 3-phosphocholine + H2O = sn-glycerol 3-phosphate + choline + H(+). Its activity is regulated as follows. Activated by PRDX1 by reduction of an intramolecular disulfide bond. Glycerophosphodiester phosphodiesterase that promotes cell cycle exit and drives spinal motor neuron differentiation. Mediates the cleavage of glycosylphosphatidylinositol (GPI) anchor of target proteins: removes the GPI-anchor of RECK, leading to release RECK from the plasma membrane. May contribute to the osmotic regulation of cellular glycerophosphocholine. This Gallus gallus (Chicken) protein is Glycerophosphodiester phosphodiesterase domain-containing protein 5 (GDPD5).